We begin with the raw amino-acid sequence, 1397 residues long: DNA-directed RNA polymerase subunit beta' (1397 aa).

Residues C75, C77, C90, and C93 each contribute to the Zn(2+) site. Residues D465, D467, and D469 each coordinate Mg(2+). C819, C893, C900, and C903 together coordinate Zn(2+).

Belongs to the RNA polymerase beta' chain family. As to quaternary structure, the RNAP catalytic core consists of 2 alpha, 1 beta, 1 beta' and 1 omega subunit. When a sigma factor is associated with the core the holoenzyme is formed, which can initiate transcription. Mg(2+) is required as a cofactor. The cofactor is Zn(2+).

The catalysed reaction is RNA(n) + a ribonucleoside 5'-triphosphate = RNA(n+1) + diphosphate. Functionally, DNA-dependent RNA polymerase catalyzes the transcription of DNA into RNA using the four ribonucleoside triphosphates as substrates. The sequence is that of DNA-directed RNA polymerase subunit beta' from Acinetobacter baumannii (strain ACICU).